The chain runs to 1002 residues: Mannan endo-1,4-beta-mannosidase (1002 aa).

Residues 1-28 (MKTTVTKLLATVAAASTIFGMSTLPAFA) form the signal peptide. In terms of domain architecture, GH26 spans 49-396 (AETRALFDKL…ADSNKNLMAS (348 aa)). Residue H144 participates in substrate binding. The Proton donor role is filled by E205. Residues W210 and Y278 each coordinate substrate. The Nucleophile role is filled by E316. Substrate is bound at residue K384. CBM11 domains lie at 523 to 703 (VDNV…GKRD) and 717 to 897 (AKAQ…NEQT). 2 disordered regions span residues 702 to 722 (RDAY…AQSV) and 888 to 969 (PAEN…LSRT). Residues 707-719 (PNTNPTPGNTAKA) are compositionally biased toward polar residues. 2 stretches are compositionally biased toward basic and acidic residues: residues 897–913 (TPKD…KEQE) and 952–966 (PDTK…KDGL). The LPXTG sorting signal motif lies at 966–970 (LSRTG). T969 carries the pentaglycyl murein peptidoglycan amidated threonine modification. Positions 970-1002 (GSNIISAIAAVAVLLLGGCAVLIARKRKGGDIE) are cleaved as a propeptide — removed by sortase.

Belongs to the glycosyl hydrolase 26 family. As to quaternary structure, homodimer.

Its subcellular location is the secreted. It localises to the cell wall. The catalysed reaction is Random hydrolysis of (1-&gt;4)-beta-D-mannosidic linkages in mannans, galactomannans and glucomannans.. In terms of biological role, beta-mannanase likely involved in the utilization of carbohydrates in the human gut. Catalyzes the hydrolysis of different beta-1,4-linked mannans, such as ivory nut mannan, konjac glucomannan, as well as carob and guar gum galactomannans, to a mixture of oligosaccharides. The dominant product from ivory nut mannan is found to be mannotriose; mannobiose and mannotetraose are produced to a lesser extent. Does not hydrolyze mannobiose, and hydrolyzes mannotriose at a significantly lower rate than the longer oligosaccharides. In Bifidobacterium adolescentis (strain ATCC 15703 / DSM 20083 / NCTC 11814 / E194a), this protein is Mannan endo-1,4-beta-mannosidase.